The following is a 579-amino-acid chain: Protein inscuteable homolog (579 aa).

The segment at 74–89 (SVQRWMEDLKLMTECE) is important for interaction with GPSM2. Positions 576-579 (ESFV) match the PDZ-binding motif.

As to quaternary structure, interacts with ALS2CR19/PAR3B and GPSM1/AGS3. Interacts with F2RL2/PAR3. Interacts with GPSM2/LGN (via TPR repeat region). Expressed in brain, kidney, liver, testis and skin.

The protein resides in the cytoplasm. The protein localises to the cell cortex. Its function is as follows. May function as an adapter linking the Par3 complex to the GPSM1/GPSM2 complex. Involved in spindle orientation during mitosis. May regulate cell proliferation and differentiation in the developing nervous system. May play a role in the asymmetric division of fibroblasts and participate in the process of stratification of the squamous epithelium. The sequence is that of Protein inscuteable homolog (Insc) from Mus musculus (Mouse).